The following is a 101-amino-acid chain: Urease subunit beta (101 aa).

The protein belongs to the urease beta subunit family. Heterotrimer of UreA (gamma), UreB (beta) and UreC (alpha) subunits. Three heterotrimers associate to form the active enzyme.

The protein localises to the cytoplasm. It carries out the reaction urea + 2 H2O + H(+) = hydrogencarbonate + 2 NH4(+). The protein operates within nitrogen metabolism; urea degradation; CO(2) and NH(3) from urea (urease route): step 1/1. The protein is Urease subunit beta of Roseobacter denitrificans (strain ATCC 33942 / OCh 114) (Erythrobacter sp. (strain OCh 114)).